A 291-amino-acid polypeptide reads, in one-letter code: Tryptophan synthase alpha chain (291 aa).

Active-site proton acceptor residues include Glu-69 and Asp-80.

Belongs to the TrpA family. In terms of assembly, tetramer of two alpha and two beta chains.

It catalyses the reaction (1S,2R)-1-C-(indol-3-yl)glycerol 3-phosphate + L-serine = D-glyceraldehyde 3-phosphate + L-tryptophan + H2O. Its pathway is amino-acid biosynthesis; L-tryptophan biosynthesis; L-tryptophan from chorismate: step 5/5. In terms of biological role, the alpha subunit is responsible for the aldol cleavage of indoleglycerol phosphate to indole and glyceraldehyde 3-phosphate. In Bifidobacterium longum (strain NCC 2705), this protein is Tryptophan synthase alpha chain.